The chain runs to 154 residues: Endoribonuclease YbeY (154 aa).

Zn(2+)-binding residues include H116, H120, and H126.

Belongs to the endoribonuclease YbeY family. Zn(2+) serves as cofactor.

It is found in the cytoplasm. In terms of biological role, single strand-specific metallo-endoribonuclease involved in late-stage 70S ribosome quality control and in maturation of the 3' terminus of the 16S rRNA. This is Endoribonuclease YbeY from Buchnera aphidicola subsp. Baizongia pistaciae (strain Bp).